The chain runs to 297 residues: Phosphoribosylaminoimidazole-succinocarboxamide synthase (297 aa).

The protein belongs to the SAICAR synthetase family.

The enzyme catalyses 5-amino-1-(5-phospho-D-ribosyl)imidazole-4-carboxylate + L-aspartate + ATP = (2S)-2-[5-amino-1-(5-phospho-beta-D-ribosyl)imidazole-4-carboxamido]succinate + ADP + phosphate + 2 H(+). It functions in the pathway purine metabolism; IMP biosynthesis via de novo pathway; 5-amino-1-(5-phospho-D-ribosyl)imidazole-4-carboxamide from 5-amino-1-(5-phospho-D-ribosyl)imidazole-4-carboxylate: step 1/2. The polypeptide is Phosphoribosylaminoimidazole-succinocarboxamide synthase (Methylobacillus flagellatus (strain ATCC 51484 / DSM 6875 / VKM B-1610 / KT)).